A 107-amino-acid polypeptide reads, in one-letter code: Quaternary ammonium compound-resistance protein QacC (107 aa).

Residues 1–2 lie on the Cytoplasmic side of the membrane; it reads MP. Residues 3-20 form a helical membrane-spanning segment; that stretch reads YIYLIIAISTEVIGSAFL. Over 21–29 the chain is Extracellular; sequence KSSEGFSKF. Residues 30 to 47 form a helical membrane-spanning segment; that stretch reads IPSLGTIISFGICFYFLS. Residues 48 to 56 are Cytoplasmic-facing; sequence KTMQHLPLN. Residues 57 to 75 form a helical membrane-spanning segment; that stretch reads ITYATWAGLGLVLTTVVSI. Residues 76–85 lie on the Extracellular side of the membrane; the sequence is IIFKEQINLI. Residues 86 to 103 traverse the membrane as a helical segment; it reads TIVSIVLIIVGVVSLNIF. At 104–107 the chain is on the cytoplasmic side; it reads GTSH.

This sequence belongs to the drug/metabolite transporter (DMT) superfamily. Small multidrug resistance (SMR) (TC 2.A.7.1) family.

It localises to the cell membrane. Ethidium export is inhibited by N-ethylmaleimide (NEM). In terms of biological role, multidrug exporter. Is implicated for the resistance to bacteriocidal quaternary ammonium compounds and ethidium bromide. The protein is Quaternary ammonium compound-resistance protein QacC of Staphylococcus aureus.